The primary structure comprises 333 residues: Beta-ketoacyl-[acyl-carrier-protein] synthase III (333 aa).

Catalysis depends on residues cysteine 114 and histidine 255. The tract at residues 256-260 is ACP-binding; that stretch reads QANYR. Asparagine 285 is a catalytic residue.

It belongs to the thiolase-like superfamily. FabH family. In terms of assembly, homodimer.

The protein resides in the cytoplasm. It carries out the reaction malonyl-[ACP] + acetyl-CoA + H(+) = 3-oxobutanoyl-[ACP] + CO2 + CoA. The protein operates within lipid metabolism; fatty acid biosynthesis. Catalyzes the condensation reaction of fatty acid synthesis by the addition to an acyl acceptor of two carbons from malonyl-ACP. Catalyzes the first condensation reaction which initiates fatty acid synthesis and may therefore play a role in governing the total rate of fatty acid production. Possesses both acetoacetyl-ACP synthase and acetyl transacylase activities. Its substrate specificity determines the biosynthesis of branched-chain and/or straight-chain of fatty acids. This chain is Beta-ketoacyl-[acyl-carrier-protein] synthase III, found in Aliarcobacter butzleri (strain RM4018) (Arcobacter butzleri).